We begin with the raw amino-acid sequence, 1159 residues long: ATP-dependent helicase/deoxyribonuclease subunit B (1159 aa).

The UvrD-like helicase ATP-binding domain occupies 1–275 (MEFNTYIGRA…TYFNTFYRYN (275 aa)). 8–15 (GRAGTGKS) is a binding site for ATP. The region spanning 269-583 (NTFYRYNNDD…SIGTMDLAKV (315 aa)) is the UvrD-like helicase C-terminal domain. Residues Cys-784, Cys-1112, Cys-1115, and Cys-1121 each coordinate [4Fe-4S] cluster.

Belongs to the helicase family. AddB/RexB type 1 subfamily. In terms of assembly, heterodimer of AddA and AddB. The cofactor is Mg(2+). [4Fe-4S] cluster is required as a cofactor.

Functionally, the heterodimer acts as both an ATP-dependent DNA helicase and an ATP-dependent, dual-direction single-stranded exonuclease. Recognizes the chi site generating a DNA molecule suitable for the initiation of homologous recombination. The AddB subunit has 5' -&gt; 3' nuclease activity but not helicase activity. The protein is ATP-dependent helicase/deoxyribonuclease subunit B of Staphylococcus epidermidis (strain ATCC 35984 / DSM 28319 / BCRC 17069 / CCUG 31568 / BM 3577 / RP62A).